A 525-amino-acid polypeptide reads, in one-letter code: Neutrophil cytosol factor 2 (525 aa).

TPR repeat units follow at residues 37-70 (SRIC…DKHS), 71-104 (AVAY…LRGN), and 121-154 (CEVL…KSEP). Residue T233 is modified to Phosphothreonine. In terms of domain architecture, SH3 1 spans 240–299 (LEGEAHRVLFGFVPETPEELQVMPGNIVFVLKKGSDNWATVMFNGQKGLVPCNYLEPVEL). The disordered stretch occupies residues 304-343 (QSQPQEDTSPESDIPPPPNSSPPGRLQLSPGHKQKEPKEL). A phosphoserine mark is found at S324 and S398. Residues 350 to 428 (PYMLKVHYKY…YCLTLWCEHT (79 aa)) form the PB1 domain. The segment at 437–457 (EPIQRENSDASKQTTEPQPKE) is disordered. In terms of domain architecture, SH3 2 spans 456–515 (KEGTQVVAIFSYEAAQPEDLEFVEGDVILVLSHVNEEWLEGECKGKVGIFPKAFVEGCAA).

The protein belongs to the NCF2/NOXA1 family. In terms of assembly, component of the phagocyte NADPH oxidase complex composed of an obligatory core heterodimer formed by the membrane proteins CYBA and CYBB and the cytosolic regulatory subunits NCF1/p47-phox, NCF2/p67-phox, NCF4/p40-phox and the small GTPase RAC1 or RAC2. Part of a cytosolic complex composed at least by NCF1, NCF2 and NCF4. Interacts with NCF4. Interacts (via the C-terminal SH3 domain) with NCF1 (via C-terminus). Interacts with SYTL1 and RAC1. May interact with NOXO1. Interacts with S100A8 and calprotectin (S100A8/9). Interacts with GBP7 (via GB1/RHD3-type G domain). Interacts with CYBB; the interaction is enhanced in the presence of GBP7.

It is found in the cytoplasm. NCF2, NCF1, and a membrane bound cytochrome b558 are required for activation of the latent NADPH oxidase (necessary for superoxide production). Functionally, subunit of the phagocyte NADPH oxidase complex that mediates the transfer of electrons from cytosolic NADPH to O2 to produce the superoxide anion (O2(-)). In the activated complex, electrons are first transferred from NADPH to flavin adenine dinucleotide (FAD) and subsequently transferred via two heme molecules to molecular oxygen, producing superoxide through an outer-sphere reaction. Activation of the NADPH oxidase complex is initiated by the assembly of cytosolic subunits of the NADPH oxidase complex with the core NADPH oxidase complex to form a complex at the plasma membrane or phagosomal membrane. This activation process is initiated by phosphorylation dependent binding of the cytosolic NCF1/p47-phox subunit to the C-terminus of CYBA/p22-phox. The protein is Neutrophil cytosol factor 2 of Mus musculus (Mouse).